We begin with the raw amino-acid sequence, 525 residues long: uncharacterized protein (525 aa).

The next 2 helical transmembrane spans lie at 28 to 48 (FIDV…NLII) and 353 to 373 (GVNA…LFTP). Residues 146–394 (DIKIGKLKVG…ELKIASKMMF (249 aa)) form the Pterin-binding domain.

Its subcellular location is the cell membrane. Functionally, unknown. Does not possess dihydropteroate synthase (DHPS) activity since it does not catalyze the condensation of 6-hydroxymethyl-7,8-dihydropterin pyrophosphate (DHPP) and 4-aminobenzoate to form 7,8-dihydropteroate. This is an uncharacterized protein from Methanocaldococcus jannaschii (strain ATCC 43067 / DSM 2661 / JAL-1 / JCM 10045 / NBRC 100440) (Methanococcus jannaschii).